An 869-amino-acid polypeptide reads, in one-letter code: Facilitated trehalose transporter Tret1 (869 aa).

Disordered stretches follow at residues 1–214 and 258–315; these read MSGR…QKAT and KESS…LIHR. Residues 1 to 404 are Cytoplasmic-facing; that stretch reads MSGRDNRGAG…VYRPTTNPIY (404 aa). Residues 25-43 show a composition bias toward basic and acidic residues; that stretch reads KLKEKLTRAGDDQGYHRVE. 3 stretches are compositionally biased toward low complexity: residues 44–57, 79–92, and 118–127; these read SNLS…SLDT, PQQQ…QQLR, and PFQQQQQRTP. Basic and acidic residues-rich tracts occupy residues 147-156 and 258-291; these read EIREHRDRQQ and KESS…KLDK. Phosphoserine occurs at positions 260, 261, 262, 332, and 334. A disordered region spans residues 336-368; the sequence is EDFHTSRQHFQQQRSISTDSRKSRRPYEMDEMG. Over residues 343 to 353 the composition is skewed to polar residues; the sequence is QHFQQQRSIST. Over residues 354-368 the composition is skewed to basic and acidic residues; it reads DSRKSRRPYEMDEMG. A helical membrane pass occupies residues 405 to 425; sequence IWTQVLAALSVSLGSLVVGFV. Residues 426–452 are Extracellular-facing; sequence SAYTSPALVSMTNRNMTSFEVTPQAAS. Asn-440 is a glycosylation site (N-linked (GlcNAc...) asparagine). The chain crosses the membrane as a helical span at residues 453-473; sequence WVGGIMPLAGLAGGIAGGPFI. The Cytoplasmic segment spans residues 474-485; the sequence is EYLGRRNTILAT. Residues 486–506 traverse the membrane as a helical segment; it reads AIPFIVSSLLIACAVNVAMVL. Over 507–509 the chain is Extracellular; the sequence is AGR. The chain crosses the membrane as a helical span at residues 510 to 530; that stretch reads FLAGFCVGIASLSLPVYLGET. Residues 531-536 are Cytoplasmic-facing; that stretch reads VQPEVR. A helical membrane pass occupies residues 537–557; the sequence is GTLGLLPTAFGNIGILLCFVA. Residues 558–564 lie on the Extracellular side of the membrane; sequence GTYMDWS. Residues 565–585 form a helical membrane-spanning segment; sequence MLAFLGAALPVPFLILMFLIP. The Cytoplasmic segment spans residues 586–654; it reads ETPRWFVSRG…NLKPLSISLG (69 aa). A helical membrane pass occupies residues 655 to 675; it reads LMFFQQLSGINAVIFYTVSIF. Over 676–685 the chain is Extracellular; sequence KDAGSTIDGN. A helical transmembrane segment spans residues 686 to 706; that stretch reads LCTIIVGIVNFMATFIATLLI. Topologically, residues 707–712 are cytoplasmic; it reads DRAGRK. Residues 713-733 traverse the membrane as a helical segment; that stretch reads ILLYVSNIAMIITLFVLGGFF. Topologically, residues 734–752 are extracellular; that stretch reads YCKSHGQDVSQLGWLPLSC. Residues 753–773 form a helical membrane-spanning segment; it reads FVIYILGFSLGFGPIPWLMMG. The Cytoplasmic segment spans residues 774–779; sequence EILPSK. The helical transmembrane segment at 780–800 threads the bilayer; it reads IRGSAASVATAFNWSCTFVVT. Residues 801-813 are Extracellular-facing; it reads KTFQDMIDFMGAH. A helical membrane pass occupies residues 814 to 834; the sequence is GAFWLFGSICFIGLFFVILYV. Topologically, residues 835–869 are cytoplasmic; sequence PETQGKTLEDIERKMMGRVRRMSSVANMKPLAFNM. Phosphoserine is present on residues Ser-857 and Ser-858.

This sequence belongs to the major facilitator superfamily. Sugar transporter (TC 2.A.1.1) family. Trehalose transporter subfamily.

It is found in the cell membrane. Its function is as follows. Low-capacity facilitative transporter for trehalose. Does not transport maltose, sucrose or lactose. Mediates the bidirectional transfer of trehalose. Responsible for the transport of trehalose synthesized in the fat body and the incorporation of trehalose into other tissues that require a carbon source, thereby regulating trehalose levels in the hemolymph. This is Facilitated trehalose transporter Tret1 from Drosophila persimilis (Fruit fly).